The chain runs to 347 residues: Ribosomal RNA small subunit methyltransferase C (347 aa).

Belongs to the methyltransferase superfamily. RsmC family. In terms of assembly, monomer.

The protein resides in the cytoplasm. It carries out the reaction guanosine(1207) in 16S rRNA + S-adenosyl-L-methionine = N(2)-methylguanosine(1207) in 16S rRNA + S-adenosyl-L-homocysteine + H(+). In terms of biological role, specifically methylates the guanine in position 1207 of 16S rRNA in the 30S particle. This Shewanella putrefaciens (strain CN-32 / ATCC BAA-453) protein is Ribosomal RNA small subunit methyltransferase C.